Here is a 132-residue protein sequence, read N- to C-terminus: Transcriptional repressor SmtB homolog (132 aa).

Zn(2+) contacts are provided by cysteine 20, histidine 26, cysteine 71, cysteine 73, aspartate 114, histidine 116, histidine 127, and glutamate 130. An HTH arsR-type domain is found at 38 to 132 (MSLDQAQQMA…EVADHLQESD (95 aa)). A DNA-binding region (H-T-H motif) is located at residues 72–91 (VCDLAAAMKVSESAVSHQLR).

As to quaternary structure, homodimer.

Transcriptional repressor of the expression of the ziaA gene. Controls zinc homeostasis by triggering ZiaA-mediated efflux of excess zinc into the periplasm. The sequence is that of Transcriptional repressor SmtB homolog (ziaR) from Synechocystis sp. (strain ATCC 27184 / PCC 6803 / Kazusa).